We begin with the raw amino-acid sequence, 373 residues long: Dual-specificity RNA methyltransferase RlmN (373 aa).

Catalysis depends on Glu94, which acts as the Proton acceptor. Positions 100 to 339 (EADRATLCVS…VIVRKTRGDD (240 aa)) constitute a Radical SAM core domain. Cysteines 107 and 344 form a disulfide. [4Fe-4S] cluster contacts are provided by Cys114, Cys118, and Cys121. S-adenosyl-L-methionine is bound by residues 168–169 (GE), Ser200, 222–224 (SLH), and Asn301. Catalysis depends on Cys344, which acts as the S-methylcysteine intermediate.

This sequence belongs to the radical SAM superfamily. RlmN family. [4Fe-4S] cluster serves as cofactor.

The protein resides in the cytoplasm. It carries out the reaction adenosine(2503) in 23S rRNA + 2 reduced [2Fe-2S]-[ferredoxin] + 2 S-adenosyl-L-methionine = 2-methyladenosine(2503) in 23S rRNA + 5'-deoxyadenosine + L-methionine + 2 oxidized [2Fe-2S]-[ferredoxin] + S-adenosyl-L-homocysteine. It catalyses the reaction adenosine(37) in tRNA + 2 reduced [2Fe-2S]-[ferredoxin] + 2 S-adenosyl-L-methionine = 2-methyladenosine(37) in tRNA + 5'-deoxyadenosine + L-methionine + 2 oxidized [2Fe-2S]-[ferredoxin] + S-adenosyl-L-homocysteine. Its function is as follows. Specifically methylates position 2 of adenine 2503 in 23S rRNA and position 2 of adenine 37 in tRNAs. m2A2503 modification seems to play a crucial role in the proofreading step occurring at the peptidyl transferase center and thus would serve to optimize ribosomal fidelity. This Tolumonas auensis (strain DSM 9187 / NBRC 110442 / TA 4) protein is Dual-specificity RNA methyltransferase RlmN.